We begin with the raw amino-acid sequence, 763 residues long: Sphingoid long-chain bases kinase 1 (763 aa).

A disordered region spans residues 34–81; it reads TGGSQQSSPIVFPEKRNKKVKASSRRGEVTNDPQVKPKPDEHRIDIGG. Basic and acidic residues predominate over residues 58-81; sequence RRGEVTNDPQVKPKPDEHRIDIGG. Residues 245–384 form the DAGKc domain; that stretch reads KSAPKMLVIL…TDVFAVEWIH (140 aa). Residues 255–257 and Thr-287 contribute to the ATP site; that span reads NPR. 313–316 serves as a coordination point for substrate; that stretch reads GGDG. Residue Asp-315 is the Proton donor/acceptor of the active site. ATP-binding positions include Glu-320, 345-347, and Arg-418; that span reads GSD. The tract at residues 561 to 603 is disordered; sequence MGLTSVQDPPTRCSWGNTGGQDREDISSTVSDPGPIWDAGPKW. Residue 733 to 735 participates in ATP binding; sequence DGE.

As to expression, expressed in roots, stems, leaves and at higher levels in flowers.

In terms of biological role, involved in the production of sphingolipid metabolites. Active on sphingosine, phytosphingosine (PHS, 4-hydroxysphinganine), D-erythro-dihydrosphingosine, D-erythro-sphingosine and trans-4, trans-8-sphingadienine, an LCB found exclusively in plants, but not on N-acetyl-dihydrosphingosine (C2-dihydroceramide) and D-threo-dihydrosphingosine. This is Sphingoid long-chain bases kinase 1 (LCBK1) from Arabidopsis thaliana (Mouse-ear cress).